The sequence spans 424 residues: Serine--tRNA ligase (424 aa).

Residue threonine 229–glutamate 231 coordinates L-serine. Arginine 260 to glutamate 262 is a binding site for ATP. Glutamate 283 contributes to the L-serine binding site. Glutamate 347–serine 350 is an ATP binding site. Serine 383 contributes to the L-serine binding site.

The protein belongs to the class-II aminoacyl-tRNA synthetase family. Type-1 seryl-tRNA synthetase subfamily. Homodimer. The tRNA molecule binds across the dimer.

Its subcellular location is the cytoplasm. It catalyses the reaction tRNA(Ser) + L-serine + ATP = L-seryl-tRNA(Ser) + AMP + diphosphate + H(+). It carries out the reaction tRNA(Sec) + L-serine + ATP = L-seryl-tRNA(Sec) + AMP + diphosphate + H(+). Its pathway is aminoacyl-tRNA biosynthesis; selenocysteinyl-tRNA(Sec) biosynthesis; L-seryl-tRNA(Sec) from L-serine and tRNA(Sec): step 1/1. In terms of biological role, catalyzes the attachment of serine to tRNA(Ser). Is also able to aminoacylate tRNA(Sec) with serine, to form the misacylated tRNA L-seryl-tRNA(Sec), which will be further converted into selenocysteinyl-tRNA(Sec). In Roseiflexus sp. (strain RS-1), this protein is Serine--tRNA ligase.